The primary structure comprises 313 residues: Small glutamine-rich tetratricopeptide repeat-containing protein alpha (313 aa).

Residues Lys-69–Glu-97 form a disordered region. Ser-77 carries the phosphoserine modification. Phosphothreonine is present on Thr-81. Ser-84 carries the post-translational modification Phosphoserine. TPR repeat units follow at residues Ala-91–Asn-124, Ala-125–Tyr-158, and Ser-159–Asn-192. The residue at position 137 (Lys-137) is an N6-acetyllysine. Ser-301 carries the phosphoserine modification. At Thr-303 the chain carries Phosphothreonine. Residue Ser-305 is modified to Phosphoserine.

This sequence belongs to the SGT family. In terms of assembly, homodimer. Homooligomer. Interacts with DNAJC5 and DNAJC5B. Interacts (via TPR repeats) with HSP90AA1. Interacts (via Gln-rich region) with SLC2A1. Interacts with HSP90AB1. Interacts (via TPR repeats) with HSPA8/Hsc70; the interaction is direct. Interacts with BAG6 (via ubiquitin-like domain); interaction prevents interaction between BAG6 and RNF126. Forms a multiprotein complex, at least composed of DNAJB12, DNAJB14, HSPA8/Hsc70 and SGTA; interaction with DNAJB14 and HSPA8/Hsc70 is direct.

Its subcellular location is the cytoplasm. The protein localises to the nucleus. Co-chaperone that binds misfolded and hydrophobic patches-containing client proteins in the cytosol. Mediates their targeting to the endoplasmic reticulum but also regulates their sorting to the proteasome when targeting fails. Functions in tail-anchored/type II transmembrane proteins membrane insertion constituting with ASNA1 and the BAG6 complex a targeting module. Functions upstream of the BAG6 complex and ASNA1, binding more rapidly the transmembrane domain of newly synthesized proteins. It is also involved in the regulation of the endoplasmic reticulum-associated misfolded protein catabolic process via its interaction with BAG6: collaborates with the BAG6 complex to maintain hydrophobic substrates in non-ubiquitinated states. Competes with RNF126 for interaction with BAG6, preventing the ubiquitination of client proteins associated with the BAG6 complex. Binds directly to HSC70 and HSP70 and regulates their ATPase activity. In Bos taurus (Bovine), this protein is Small glutamine-rich tetratricopeptide repeat-containing protein alpha (SGTA).